Reading from the N-terminus, the 114-residue chain is T cell receptor beta variable 10-2 (114 aa).

The N-terminal stretch at 1 to 21 (MGTRLFFYVALCLLWAGHRDA) is a signal peptide. An Ig-like domain is found at 22 to 114 (GITQSPRYKI…TSVYFCASSE (93 aa)). C42 and C110 are oxidised to a cystine.

As to quaternary structure, alpha-beta TR is a heterodimer composed of an alpha and beta chain; disulfide-linked. The alpha-beta TR is associated with the transmembrane signaling CD3 coreceptor proteins to form the TR-CD3 (TcR or TCR). The assembly of alpha-beta TR heterodimers with CD3 occurs in the endoplasmic reticulum where a single alpha-beta TR heterodimer associates with one CD3D-CD3E heterodimer, one CD3G-CD3E heterodimer and one CD247 homodimer forming a stable octameric structure. CD3D-CD3E and CD3G-CD3E heterodimers preferentially associate with TR alpha and TR beta chains, respectively. The association of the CD247 homodimer is the last step of TcR assembly in the endoplasmic reticulum and is required for transport to the cell surface.

The protein resides in the cell membrane. In terms of biological role, v region of the variable domain of T cell receptor (TR) beta chain that participates in the antigen recognition. Alpha-beta T cell receptors are antigen specific receptors which are essential to the immune response and are present on the cell surface of T lymphocytes. Recognize peptide-major histocompatibility (MH) (pMH) complexes that are displayed by antigen presenting cells (APC), a prerequisite for efficient T cell adaptive immunity against pathogens. Binding of alpha-beta TR to pMH complex initiates TR-CD3 clustering on the cell surface and intracellular activation of LCK that phosphorylates the ITAM motifs of CD3G, CD3D, CD3E and CD247 enabling the recruitment of ZAP70. In turn ZAP70 phosphorylates LAT, which recruits numerous signaling molecules to form the LAT signalosome. The LAT signalosome propagates signal branching to three major signaling pathways, the calcium, the mitogen-activated protein kinase (MAPK) kinase and the nuclear factor NF-kappa-B (NF-kB) pathways, leading to the mobilization of transcription factors that are critical for gene expression and essential for T cell growth and differentiation. The T cell repertoire is generated in the thymus, by V-(D)-J rearrangement. This repertoire is then shaped by intrathymic selection events to generate a peripheral T cell pool of self-MH restricted, non-autoaggressive T cells. Post-thymic interaction of alpha-beta TR with the pMH complexes shapes TR structural and functional avidity. This Homo sapiens (Human) protein is T cell receptor beta variable 10-2.